The chain runs to 370 residues: Asporin (370 aa).

Positions 1 to 15 (MKVYVLLVFLTLCSA) are cleaved as a signal peptide. An O-linked (GalNAc...) serine glycan is attached at Ser-45. The LRRNT domain maps to 56-92 (FFPFDLFSTCPFGCQCYSRVVHCSDLGLSSVPSNIPF). 2 cysteine pairs are disulfide-bonded: Cys-65–Cys-71 and Cys-69–Cys-78. 11 LRR repeats span residues 93–114 (DTRM…DFKG), 117–138 (SLYA…AFLT), 141–163 (KLRR…PKSL), 164–183 (AELR…TFKG), 186–209 (ALHV…AFEG), 232–253 (TLLE…DFKR), 256–277 (DLQR…SLAN), 280–302 (RVRE…QELK), 303–324 (YLQI…DFCP), 332–354 (SLYS…PATF), and 355–370 (RCVL…NFRK). Asn-272 is a glycosylation site (N-linked (GlcNAc...) asparagine). A disulfide bond links Cys-323 and Cys-356.

Belongs to the small leucine-rich proteoglycan (SLRP) family. SLRP class I subfamily.

It localises to the secreted. Its subcellular location is the extracellular space. It is found in the extracellular matrix. In Bos taurus (Bovine), this protein is Asporin (ASPN).